Consider the following 376-residue polypeptide: PqqA peptide cyclase (376 aa).

The Radical SAM core domain maps to 7-222; that stretch reads VGLPLWLLAE…TNEYRDKLKA (216 aa). Residues C21, C25, and C28 each contribute to the [4Fe-4S] cluster site.

The protein belongs to the radical SAM superfamily. PqqE family. In terms of assembly, interacts with PqqD. The interaction is necessary for activity of PqqE. [4Fe-4S] cluster is required as a cofactor.

The enzyme catalyses [PQQ precursor protein] + S-adenosyl-L-methionine = E-Y cross-linked-[PQQ precursor protein] + 5'-deoxyadenosine + L-methionine + H(+). It functions in the pathway cofactor biosynthesis; pyrroloquinoline quinone biosynthesis. Catalyzes the cross-linking of a glutamate residue and a tyrosine residue in the PqqA protein as part of the biosynthesis of pyrroloquinoline quinone (PQQ). In Pseudomonas putida (strain ATCC 700007 / DSM 6899 / JCM 31910 / BCRC 17059 / LMG 24140 / F1), this protein is PqqA peptide cyclase.